A 254-amino-acid chain; its full sequence is 5-oxoprolinase subunit A (254 aa).

Belongs to the LamB/PxpA family. Forms a complex composed of PxpA, PxpB and PxpC.

It carries out the reaction 5-oxo-L-proline + ATP + 2 H2O = L-glutamate + ADP + phosphate + H(+). Its function is as follows. Catalyzes the cleavage of 5-oxoproline to form L-glutamate coupled to the hydrolysis of ATP to ADP and inorganic phosphate. The chain is 5-oxoprolinase subunit A from Burkholderia mallei (strain NCTC 10247).